The sequence spans 366 residues: Transmembrane protein 26 (366 aa).

Helical transmembrane passes span 4–24 (LVLL…LVAV), 36–56 (YWLL…TLKF), and 64–84 (WLSP…WLLE). N-linked (GlcNAc...) asparagine glycosylation is present at Asn110. Transmembrane regions (helical) follow at residues 138–158 (MVCE…ILII), 176–196 (ELLL…TETL), 208–228 (VSGI…DLAV), 258–278 (IGLS…VLMI), and 282–302 (VINH…ALHF). The segment covering 319–329 (HPESPKPEHSG) has biased composition (basic and acidic residues). Residues 319–366 (HPESPKPEHSGPDQPSESGPSEWEDASPEALPLRTSPVTSEESYPTTP) form a disordered region. The segment covering 354-366 (SPVTSEESYPTTP) has biased composition (polar residues).

The protein resides in the membrane. The sequence is that of Transmembrane protein 26 (Tmem26) from Mus musculus (Mouse).